A 289-amino-acid chain; its full sequence is NAD(P)H-hydrate epimerase (289 aa).

In terms of domain architecture, YjeF N-terminal spans 71–277; that stretch reads AQTIDNELMS…SIVEKYNLKV (207 aa). Residue 122–126 participates in (6S)-NADPHX binding; it reads NNGGD. 2 residues coordinate K(+): N123 and D185. Residues 189–195 and D218 contribute to the (6S)-NADPHX site; that span reads GFSFTGE. Residue S221 participates in K(+) binding.

This sequence belongs to the NnrE/AIBP family. K(+) is required as a cofactor.

It catalyses the reaction (6R)-NADHX = (6S)-NADHX. The enzyme catalyses (6R)-NADPHX = (6S)-NADPHX. In terms of biological role, catalyzes the epimerization of the S- and R-forms of NAD(P)HX, a damaged form of NAD(P)H that is a result of enzymatic or heat-dependent hydration. This is a prerequisite for the S-specific NAD(P)H-hydrate dehydratase to allow the repair of both epimers of NAD(P)HX. The protein is NAD(P)H-hydrate epimerase of Plasmodium vivax (strain Salvador I).